The chain runs to 854 residues: Translation initiation factor IF-2 (854 aa).

Disordered stretches follow at residues 52–79 (RQHGEEGDNSQRITLQRKTTSTLSRDGG) and 128–265 (RKQE…HGFQ). Over residues 61-75 (SQRITLQRKTTSTLS) the composition is skewed to polar residues. Composition is skewed to basic and acidic residues over residues 128 to 150 (RKQEEEKAAKAKAEAEEKARQEA) and 211 to 232 (VRHDNDKDKDKPRGRVNPDNKR). Over residues 247 to 257 (RGKLGRKNKKP) the composition is skewed to basic residues. Positions 354–523 (KRAPVVTVMG…LLQAEVLELT (170 aa)) constitute a tr-type G domain. The interval 363–370 (GHVDHGKT) is G1. 363–370 (GHVDHGKT) contributes to the GTP binding site. The interval 388 to 392 (GITQH) is G2. The tract at residues 409–412 (DTPG) is G3. 409–413 (DTPGH) is a binding site for GTP. The interval 463 to 466 (TKID) is G4. A G5 region spans residues 499-501 (SAK).

It belongs to the TRAFAC class translation factor GTPase superfamily. Classic translation factor GTPase family. IF-2 subfamily.

The protein localises to the cytoplasm. One of the essential components for the initiation of protein synthesis. Protects formylmethionyl-tRNA from spontaneous hydrolysis and promotes its binding to the 30S ribosomal subunits. Also involved in the hydrolysis of GTP during the formation of the 70S ribosomal complex. In Marinomonas sp. (strain MWYL1), this protein is Translation initiation factor IF-2.